The primary structure comprises 21 residues: Thylakoid lumenal 13.8 kDa protein (21 aa).

It is found in the plastid. The protein localises to the chloroplast thylakoid lumen. The sequence is that of Thylakoid lumenal 13.8 kDa protein from Spinacia oleracea (Spinach).